A 471-amino-acid polypeptide reads, in one-letter code: Glutamate--tRNA ligase (471 aa).

Positions 9-19 match the 'HIGH' region motif; the sequence is PSPTGYLHVGG. Positions 98, 100, 125, and 127 each coordinate Zn(2+). The short motif at 237 to 241 is the 'KMSKS' region element; sequence KLSKR. Lys240 is an ATP binding site.

The protein belongs to the class-I aminoacyl-tRNA synthetase family. Glutamate--tRNA ligase type 1 subfamily. Monomer. Zn(2+) is required as a cofactor.

It localises to the cytoplasm. The catalysed reaction is tRNA(Glu) + L-glutamate + ATP = L-glutamyl-tRNA(Glu) + AMP + diphosphate. Functionally, catalyzes the attachment of glutamate to tRNA(Glu) in a two-step reaction: glutamate is first activated by ATP to form Glu-AMP and then transferred to the acceptor end of tRNA(Glu). The sequence is that of Glutamate--tRNA ligase from Cronobacter sakazakii (strain ATCC BAA-894) (Enterobacter sakazakii).